Reading from the N-terminus, the 435-residue chain is Eukaryotic translation initiation factor 3 subunit E (435 aa).

Positions T241–Q409 constitute a PCI domain.

It belongs to the eIF-3 subunit E family. In terms of assembly, component of the eukaryotic translation initiation factor 3 (eIF-3) complex.

Its subcellular location is the cytoplasm. Component of the eukaryotic translation initiation factor 3 (eIF-3) complex, which is involved in protein synthesis of a specialized repertoire of mRNAs and, together with other initiation factors, stimulates binding of mRNA and methionyl-tRNAi to the 40S ribosome. The eIF-3 complex specifically targets and initiates translation of a subset of mRNAs involved in cell proliferation. The chain is Eukaryotic translation initiation factor 3 subunit E from Phaeosphaeria nodorum (strain SN15 / ATCC MYA-4574 / FGSC 10173) (Glume blotch fungus).